A 432-amino-acid polypeptide reads, in one-letter code: Neuronal pentraxin-1 (432 aa).

Residues 1–22 (MLAGRAARTCALLALCLLGSGA) form the signal peptide. The disordered stretch occupies residues 88 to 122 (RCESQSTLDSGPGEARSGGGRKQPGSGKNTMGDLS). 2 N-linked (GlcNAc...) asparagine glycosylation sites follow: asparagine 154 and asparagine 193. One can recognise a Pentraxin (PTX) domain in the interval 226–428 (DKFQLTFPLR…GATKWTFEAC (203 aa)). Cysteine 256 and cysteine 316 are disulfide-bonded. Ca(2+) contacts are provided by asparagine 280, glutamate 358, glutamine 359, aspartate 360, and glutamine 370.

In terms of assembly, homooligomer or heterooligomer (probably pentamer) with neuronal pentraxin receptor (NPTXR). Ca(2+) serves as cofactor. In terms of tissue distribution, expressed in brain and kidney.

Its subcellular location is the secreted. It is found in the cytoplasmic vesicle. The protein resides in the secretory vesicle. The protein localises to the endoplasmic reticulum. Its function is as follows. May be involved in mediating uptake of synaptic material during synapse remodeling or in mediating the synaptic clustering of AMPA glutamate receptors at a subset of excitatory synapses. The protein is Neuronal pentraxin-1 (Nptx1) of Mus musculus (Mouse).